The following is a 384-amino-acid chain: S-adenosylmethionine synthase (384 aa).

Residue His15 participates in ATP binding. Asp17 is a binding site for Mg(2+). Glu43 provides a ligand contact to K(+). Glu56 and Gln99 together coordinate L-methionine. Positions 99–109 are flexible loop; sequence QSPDINQGVDR. ATP is bound by residues 164–166, 230–231, Asp239, 245–246, Ala262, and Lys266; these read DAK, RF, and RK. Asp239 contributes to the L-methionine binding site. An L-methionine-binding site is contributed by Lys270.

The protein belongs to the AdoMet synthase family. As to quaternary structure, homotetramer; dimer of dimers. It depends on Mg(2+) as a cofactor. Requires K(+) as cofactor.

Its subcellular location is the cytoplasm. The catalysed reaction is L-methionine + ATP + H2O = S-adenosyl-L-methionine + phosphate + diphosphate. It participates in amino-acid biosynthesis; S-adenosyl-L-methionine biosynthesis; S-adenosyl-L-methionine from L-methionine: step 1/1. Its function is as follows. Catalyzes the formation of S-adenosylmethionine (AdoMet) from methionine and ATP. The overall synthetic reaction is composed of two sequential steps, AdoMet formation and the subsequent tripolyphosphate hydrolysis which occurs prior to release of AdoMet from the enzyme. This chain is S-adenosylmethionine synthase, found in Yersinia pseudotuberculosis serotype IB (strain PB1/+).